The following is a 375-amino-acid chain: Putrescine N-methyltransferase 1 (375 aa).

2 stretches are compositionally biased toward polar residues: residues 24–50 (HQNG…QNGT) and 57–77 (HQNG…GNEL). The interval 24–77 (HQNGTSEHLNGYQNGTSKHQNGHQNGTFEHRNGHQNGTSEQQNGTISHDNGNEL) is disordered. The PABS domain maps to 86-323 (PGWFSEFSAL…GVIGYMLCST (238 aa)). S-adenosyl-L-methionine-binding positions include glutamine 117, glutamate 192, and 223 to 224 (DG). The active-site Proton acceptor is the aspartate 242. Tyrosine 311 contacts S-adenosyl-L-methionine.

The protein belongs to the class I-like SAM-binding methyltransferase superfamily. Putrescine methyltransferase family. In terms of tissue distribution, predominantly expressed in roots.

It catalyses the reaction putrescine + S-adenosyl-L-methionine = N-methylputrescine + S-adenosyl-L-homocysteine + H(+). It participates in alkaloid biosynthesis; nicotine biosynthesis. Functionally, involved in the biosynthesis of pyridine alkaloid natural products, leading mainly to the production of anabasine, anatabine, nicotine and nornicotine, effective deterrents against herbivores with antiparasitic and pesticide properties (neurotoxins); nornicotine serves as the precursor in the synthesis of the carcinogen compound N'-nitrosonornicotine (NNN). Methyltransferase that mediates the conversion of putrescine to N-methylputrescine. Promotes leaves ripening. In Nicotiana tabacum (Common tobacco), this protein is Putrescine N-methyltransferase 1.